A 313-amino-acid polypeptide reads, in one-letter code: Ribosomal protein L11 methyltransferase (313 aa).

Residues Thr-154, Gly-179, Asp-201, and Asn-242 each coordinate S-adenosyl-L-methionine.

Belongs to the methyltransferase superfamily. PrmA family.

The protein localises to the cytoplasm. The catalysed reaction is L-lysyl-[protein] + 3 S-adenosyl-L-methionine = N(6),N(6),N(6)-trimethyl-L-lysyl-[protein] + 3 S-adenosyl-L-homocysteine + 3 H(+). Methylates ribosomal protein L11. The protein is Ribosomal protein L11 methyltransferase of Xanthomonas oryzae pv. oryzae (strain MAFF 311018).